The primary structure comprises 523 residues: Leghemoglobin reductase (523 aa).

The transit peptide at 1-30 directs the protein to the mitochondrion; sequence MAMASLARRKAYAVVSSSRSSVFLTSLRGF. FAD is bound by residues 66–75, lysine 84, glycine 148, and 177–179; these read EKRGTLGGTC and TGS. Cysteine 75 and cysteine 80 are oxidised to a cystine. NAD(+)-binding positions include 214-221, glutamate 237, valine 271, and glycine 306; that span reads GAGYIGLE. Residues aspartate 347 and 353–356 contribute to the FAD site; that span reads MLAH. Histidine 479 functions as the Proton acceptor in the catalytic mechanism.

This sequence belongs to the class-I pyridine nucleotide-disulfide oxidoreductase family. As to quaternary structure, homodimer. It depends on FAD as a cofactor.

The protein localises to the mitochondrion. The catalysed reaction is 2 Fe(III)-[leghemoglobin] + NADH = 2 Fe(II)-[leghemoglobin] + NAD(+) + H(+). It catalyses the reaction 2 Fe(III)-[leghemoglobin] + NADPH = 2 Fe(II)-[leghemoglobin] + NADP(+) + H(+). Reduces ferric leghemoglobin (Lb) to ferrous Lb. The chain is Leghemoglobin reductase (FLBR) from Vigna unguiculata (Cowpea).